The chain runs to 37 residues: Large ribosomal subunit protein bL36c (37 aa).

The protein belongs to the bacterial ribosomal protein bL36 family.

It is found in the plastid. This Cuscuta reflexa (Southern Asian dodder) protein is Large ribosomal subunit protein bL36c.